The primary structure comprises 543 residues: MKTNYIFVTGGVVSSLGKGIAVASLAAILEARGLKVTIMKLDPYINVDPGTISPIQHGEVFVTEDGAETDLDLGHYERFIRTKMSRRNNFTTGRIYFDVLHKERRGDYLGATIQVIPHITNTIKQRIIECGEGHDVVLVEIGGTVGDIESLPFLEAIRQMAGEVGRDHTLYMHLTLVPYIKAAGEVKTKPTQHSVKELLSIGIQPDVLICRSDRAVPSNERAKIALFCNVSEKAVISLKDVDSIYKIPALLKSQYLDDYICERFSLKCPKANLSEWEQVIYQQANPVGEVTVGIVGKYIDLPDAYKSVIEALHHAGLKNRIAVNICLIHSQDVETRSVKILQDLDAILIPGGFGYRGVEGKIMTAQYAREKQIPYLGICLGMQVAIVEFARHVAGMPEANSTEFVSDCKYPVVALITEWYEENNNRKLSNLGGTMRLGSQPCKLTYGSLAYQIYGKTIIMERHRHRYEVNNMLLKQIEAAGLRVAGLSEDYKLVEMIEYPAHPWFIASQFHPEFNSTPRDGHPLFTGFIKAASEYQKKQLNKM.

The tract at residues 1 to 266 (MKTNYIFVTG…DDYICERFSL (266 aa)) is amidoligase domain. Residue Ser14 participates in CTP binding. Position 14 (Ser14) interacts with UTP. ATP contacts are provided by residues 15-20 (SLGKGI) and Asp72. Mg(2+) is bound by residues Asp72 and Glu140. CTP-binding positions include 147–149 (DIE), 187–192 (KTKPTQ), and Lys223. UTP contacts are provided by residues 187-192 (KTKPTQ) and Lys223. 239–241 (KDV) serves as a coordination point for ATP. The Glutamine amidotransferase type-1 domain occupies 291–538 (TVGIVGKYID…IKAASEYQKK (248 aa)). Residue Gly352 participates in L-glutamine binding. The Nucleophile; for glutamine hydrolysis role is filled by Cys379. L-glutamine contacts are provided by residues 380 to 383 (LGMQ), Glu403, and Arg466. Catalysis depends on residues His511 and Glu513.

Belongs to the CTP synthase family. As to quaternary structure, homotetramer.

It carries out the reaction UTP + L-glutamine + ATP + H2O = CTP + L-glutamate + ADP + phosphate + 2 H(+). The enzyme catalyses L-glutamine + H2O = L-glutamate + NH4(+). It catalyses the reaction UTP + NH4(+) + ATP = CTP + ADP + phosphate + 2 H(+). It functions in the pathway pyrimidine metabolism; CTP biosynthesis via de novo pathway; CTP from UDP: step 2/2. Allosterically activated by GTP, when glutamine is the substrate; GTP has no effect on the reaction when ammonia is the substrate. The allosteric effector GTP functions by stabilizing the protein conformation that binds the tetrahedral intermediate(s) formed during glutamine hydrolysis. Inhibited by the product CTP, via allosteric rather than competitive inhibition. Functionally, catalyzes the ATP-dependent amination of UTP to CTP with either L-glutamine or ammonia as the source of nitrogen. Regulates intracellular CTP levels through interactions with the four ribonucleotide triphosphates. The sequence is that of CTP synthase from Baumannia cicadellinicola subsp. Homalodisca coagulata.